The following is a 361-amino-acid chain: Cysteine-rich with EGF-like domain protein 2-B (361 aa).

The first 24 residues, Met1 to Ala24, serve as a signal peptide directing secretion. In terms of domain architecture, EGF-like 1 spans Asp134 to Leu176. 3 cysteine pairs are disulfide-bonded: Cys138–Cys152, Cys146–Cys164, and Cys166–Cys175. An N-linked (GlcNAc...) asparagine glycan is attached at Asn188. 2 FU repeats span residues His191–Pro238 and Ser251–Leu298. The 42-residue stretch at Asp288 to Val329 folds into the EGF-like 2; calcium-binding domain. Intrachain disulfides connect Cys292–Cys306, Cys299–Cys315, and Cys317–Cys328. Positions Ile339–Leu361 are disordered. Positions Thr346 to Asn355 are enriched in polar residues.

It belongs to the CRELD family.

It is found in the secreted. The protein resides in the endoplasmic reticulum. Its function is as follows. Possible role in neuronal acetylcholine receptor transport. This chain is Cysteine-rich with EGF-like domain protein 2-B (creld2-b), found in Xenopus laevis (African clawed frog).